A 223-amino-acid chain; its full sequence is Virulence transcriptional regulatory protein PhoP (223 aa).

Residues 2–116 (RVLVVEDNAL…EVMARMQALM (115 aa)) enclose the Response regulatory domain. Aspartate 51 is modified (4-aspartylphosphate). A DNA-binding region (ompR/PhoB-type) is located at residues 124–222 (SQVISLPPFQ…VRGQGYLFEL (99 aa)).

Post-translationally, phosphorylated by PhoQ.

The protein resides in the cytoplasm. Functionally, member of the two-component regulatory system PhoQ/PhoP involved in virulence and adaptation to low Mg(2+) environments. Necessary for resistance to killing by polymorphonuclear leukocytes (PMNs) and cationic antimicrobial peptides (CAMP) they produce. The polypeptide is Virulence transcriptional regulatory protein PhoP (phoP) (Shigella flexneri).